The sequence spans 635 residues: Early transcription factor 70 kDa subunit (635 aa).

Residues arginine 32–glutamate 185 form the Helicase ATP-binding domain. An ATP-binding site is contributed by histidine 45–threonine 52. The DEXH box signature appears at aspartate 135–histidine 138.

The protein belongs to the helicase family. VETF subfamily. Heterodimer of a 70 kDa and a 82 kDa subunit. Part of the early transcription complex composed of ETF, RAP94, and the DNA-directed RNA polymerase.

Its subcellular location is the virion. Its function is as follows. Acts with RNA polymerase to initiate transcription from early gene promoters. Is recruited by the RPO-associated protein of 94 kDa (RAP94) to form the early transcription complex, which also contains the core RNA polymerase. ETF heterodimer binds to early gene promoters. The chain is Early transcription factor 70 kDa subunit (VETFS) from Homo sapiens (Human).